A 154-amino-acid chain; its full sequence is Snaclec dabocetin subunit alpha (154 aa).

A signal peptide spans 1–23 (MGRFISVSFGLLVVFLSLSGTGA). 3 disulfides stabilise this stretch: Cys25–Cys36, Cys53–Cys148, and Cys123–Cys140. The C-type lectin domain occupies 32–149 (HEGHCYKVFK…CGDKNPFICK (118 aa)).

Belongs to the snaclec family. In terms of assembly, heterodimer of subunits alpha and beta; disulfide-linked. As to expression, expressed by the venom gland.

The protein localises to the secreted. Its function is as follows. Inhibits ristocetin-induced platelet aggregation via binding to platelet glycoprotein Ibalpha (GP1BA). This Daboia siamensis (Eastern Russel's viper) protein is Snaclec dabocetin subunit alpha.